The chain runs to 232 residues: Phosphoglycolate phosphatase (232 aa).

Catalysis depends on Asp-8, which acts as the Nucleophile. Mg(2+) contacts are provided by Asp-8 and Asp-10. Substrate is bound at residue Lys-156. Mg(2+) is bound by residues Asp-179 and Asp-183.

Belongs to the archaeal SPP-like hydrolase family. The cofactor is Mg(2+).

It carries out the reaction 2-phosphoglycolate + H2O = glycolate + phosphate. In terms of biological role, catalyzes the dephosphorylation of 2-phosphoglycolate. This is Phosphoglycolate phosphatase from Methanopyrus kandleri (strain AV19 / DSM 6324 / JCM 9639 / NBRC 100938).